The sequence spans 300 residues: 4-hydroxy-tetrahydrodipicolinate synthase (300 aa).

Thr-54 contacts pyruvate. Tyr-142 functions as the Proton donor/acceptor in the catalytic mechanism. The active-site Schiff-base intermediate with substrate is Lys-170. Ile-212 provides a ligand contact to pyruvate.

The protein belongs to the DapA family. Homotetramer; dimer of dimers.

It localises to the cytoplasm. It catalyses the reaction L-aspartate 4-semialdehyde + pyruvate = (2S,4S)-4-hydroxy-2,3,4,5-tetrahydrodipicolinate + H2O + H(+). It participates in amino-acid biosynthesis; L-lysine biosynthesis via DAP pathway; (S)-tetrahydrodipicolinate from L-aspartate: step 3/4. Catalyzes the condensation of (S)-aspartate-beta-semialdehyde [(S)-ASA] and pyruvate to 4-hydroxy-tetrahydrodipicolinate (HTPA). This chain is 4-hydroxy-tetrahydrodipicolinate synthase, found in Halorhodospira halophila (strain DSM 244 / SL1) (Ectothiorhodospira halophila (strain DSM 244 / SL1)).